Consider the following 173-residue polypeptide: NAD(P)H-quinone oxidoreductase subunit I, chloroplastic (173 aa).

4Fe-4S ferredoxin-type domains follow at residues 55-84 and 95-124; these read GRIH…VDWD and RSYS…MTEE. The [4Fe-4S] cluster site is built by cysteine 64, cysteine 67, cysteine 70, cysteine 74, cysteine 104, cysteine 107, cysteine 110, and cysteine 114.

Belongs to the complex I 23 kDa subunit family. NDH is composed of at least 16 different subunits, 5 of which are encoded in the nucleus. The cofactor is [4Fe-4S] cluster.

The protein localises to the plastid. It localises to the chloroplast thylakoid membrane. The enzyme catalyses a plastoquinone + NADH + (n+1) H(+)(in) = a plastoquinol + NAD(+) + n H(+)(out). It carries out the reaction a plastoquinone + NADPH + (n+1) H(+)(in) = a plastoquinol + NADP(+) + n H(+)(out). Its function is as follows. NDH shuttles electrons from NAD(P)H:plastoquinone, via FMN and iron-sulfur (Fe-S) centers, to quinones in the photosynthetic chain and possibly in a chloroplast respiratory chain. The immediate electron acceptor for the enzyme in this species is believed to be plastoquinone. Couples the redox reaction to proton translocation, and thus conserves the redox energy in a proton gradient. The polypeptide is NAD(P)H-quinone oxidoreductase subunit I, chloroplastic (Nephroselmis olivacea (Green alga)).